The following is a 673-amino-acid chain: UvrABC system protein B (673 aa).

In terms of domain architecture, Helicase ATP-binding spans 26-414 (EGLEDGLAHQ…GDEVVDQVVR (389 aa)). Position 39 to 46 (39 to 46 (GVTGSGKT)) interacts with ATP. A Beta-hairpin motif is present at residues 92–115 (YYDYYQPEAYVPSSDTFIEKDASV). The 167-residue stretch at 431–597 (QVDDLLSEIR…GLNKKVVDIL (167 aa)) folds into the Helicase C-terminal domain. In terms of domain architecture, UVR spans 633–668 (QQKIHELEEQMMQHAQNLEFEEAAQIRDQLHQLREL).

Belongs to the UvrB family. Forms a heterotetramer with UvrA during the search for lesions. Interacts with UvrC in an incision complex.

The protein localises to the cytoplasm. The UvrABC repair system catalyzes the recognition and processing of DNA lesions. A damage recognition complex composed of 2 UvrA and 2 UvrB subunits scans DNA for abnormalities. Upon binding of the UvrA(2)B(2) complex to a putative damaged site, the DNA wraps around one UvrB monomer. DNA wrap is dependent on ATP binding by UvrB and probably causes local melting of the DNA helix, facilitating insertion of UvrB beta-hairpin between the DNA strands. Then UvrB probes one DNA strand for the presence of a lesion. If a lesion is found the UvrA subunits dissociate and the UvrB-DNA preincision complex is formed. This complex is subsequently bound by UvrC and the second UvrB is released. If no lesion is found, the DNA wraps around the other UvrB subunit that will check the other stand for damage. In Salmonella typhi, this protein is UvrABC system protein B.